The primary structure comprises 202 residues: Protein GrpE 1 (202 aa).

This sequence belongs to the GrpE family. As to quaternary structure, homodimer.

It is found in the cytoplasm. Participates actively in the response to hyperosmotic and heat shock by preventing the aggregation of stress-denatured proteins, in association with DnaK and GrpE. It is the nucleotide exchange factor for DnaK and may function as a thermosensor. Unfolded proteins bind initially to DnaJ; upon interaction with the DnaJ-bound protein, DnaK hydrolyzes its bound ATP, resulting in the formation of a stable complex. GrpE releases ADP from DnaK; ATP binding to DnaK triggers the release of the substrate protein, thus completing the reaction cycle. Several rounds of ATP-dependent interactions between DnaJ, DnaK and GrpE are required for fully efficient folding. The protein is Protein GrpE 1 of Buchnera aphidicola subsp. Schizaphis graminum (strain Sg).